The sequence spans 213 residues: High frequency lysogenization protein HflD homolog (213 aa).

Positions 79–122 form a coiled coil; sequence QGLNAELTRYTLSLMVLERKLSSAKGALNTLGDRINGLQRQLDH.

It belongs to the HflD family.

The protein localises to the cytoplasm. It localises to the cell inner membrane. The polypeptide is High frequency lysogenization protein HflD homolog (Salmonella dublin (strain CT_02021853)).